The primary structure comprises 238 residues: Thrombin-like enzyme collinein-1 (238 aa).

The Peptidase S1 domain maps to 1 to 229 (VIGGDECNIN…HLDWIQNIIA (229 aa)). Disulfide bonds link C7–C141, C28–C44, C78–C236, C120–C190, C152–C169, and C180–C205. Active-site charge relay system residues include H43 and D88. S184 serves as the catalytic Charge relay system.

This sequence belongs to the peptidase S1 family. Snake venom subfamily. Monomer. Expressed by the venom gland.

It is found in the secreted. Its activity is regulated as follows. Inhibited by Cu(2+) and, to a lesser extent, by Zn(2+) and Ba(2+). Not inhibited by Ca(2+) and Mg(2+). Functionally, thrombin-like snake venom serine protease. Releases fibrinopeptide A and B in the conversion of fibrinogen to fibrin, with preferential activity on the alpha chain of fibrinogen. Also hydrolyzes N-p-toluensulfonyl arginine ester (TAME) and chromogenic artificial substrates of the blood coagulation cascade: S-2222 for factor Xa, S-2302 for kallikrein and S-2238 for thrombin. When tested in vitro, the recombinant protein does not degrade blood clots, suggesting that this toxin lacks fibrinolytic activity. In addition, it moderately inhibits human Kv10.1/KCNH1/EAG1 currents, with a mechanism independent of its enzymatic activity. It selectively blocks Kv10.1/KCNH1/EAG1 in a time and dose-dependent manner (IC(50)=4.2 uM for native protein and IC(50)=2.5 uM for recombinant protein). It may have a preference in interacting with Kv10.1/KCNH1/EAG1 in its closed state, since the inhibitory effect of the toxin is decreased at more depolarized potentials. Corroboratively, it may have possible antitumor applications, since it reduces the viability of human breast cancer cell line MCF-7, which strongly expresses Kv10.1/KCNH1/EAG1, but does not affect the liver carcinoma and the non-tumorigenic epithelial breast cell lines, which weakly express Kv10.1/KCNH1/EAG1. When tested on peripheral blood mononuclear cells (PBMC), the native protein shows mild cytotoxicity, whereas the recombinant protein does not show any cytotoxicity. Native form is not immununogenic, since it does not induce statistically significant antibody production in mice, whereas recombinant form shows an antibody titer slightly higher than the native form. In vivo, subplantar injection in mice paw induces a discreet paw edema. In addition, intraperitoneal injection of the recombinant protein into mice led to fibrinogen depletion, resulting in the blood incoagulability. The sequence is that of Thrombin-like enzyme collinein-1 from Crotalus durissus collilineatus (Brazilian rattlesnake).